Reading from the N-terminus, the 154-residue chain is Ascorbate-specific PTS system EIIA component (154 aa).

One can recognise a PTS EIIA type-2 domain in the interval 6–150 (SLAENKSIRL…QEVLDLIDRT (145 aa)). His68 (tele-phosphohistidine intermediate) is an active-site residue. At His68 the chain carries Phosphohistidine.

It localises to the cytoplasm. The phosphoenolpyruvate-dependent sugar phosphotransferase system (sugar PTS), a major carbohydrate active transport system, catalyzes the phosphorylation of incoming sugar substrates concomitantly with their translocation across the cell membrane. The enzyme II UlaABC PTS system is involved in ascorbate transport. This Shigella boydii serotype 4 (strain Sb227) protein is Ascorbate-specific PTS system EIIA component (ulaC).